The chain runs to 332 residues: CXADR-like membrane protein (332 aa).

The first 19 residues, M1 to A19, serve as a signal peptide directing secretion. 2 consecutive Ig-like C2-type domains span residues Q20–T123 and P130–T220. Residues Q20–A231 lie on the Extracellular side of the membrane. Cystine bridges form between C35-C109 and C151-C204. Residue N193 is glycosylated (N-linked (GlcNAc...) asparagine). Residues G232–F252 traverse the membrane as a helical segment. Topologically, residues H253–I332 are cytoplasmic. The tract at residues P276–I332 is disordered. The segment covering S285–S310 has biased composition (low complexity). Basic and acidic residues predominate over residues P320–I332.

Its subcellular location is the cell junction. The protein resides in the tight junction. It localises to the cell membrane. This is CXADR-like membrane protein (clmp) from Xenopus tropicalis (Western clawed frog).